A 673-amino-acid polypeptide reads, in one-letter code: G-protein-signaling modulator 1 (673 aa).

Positions 1 to 507 (MASPAPPAAE…DLLSKFQSSR (507 aa)) are mediates association with membranes. 9 TPR repeats span residues 28–61 (CLELALEGERLCKAGDFKAGVAFFEAAVQVGTED), 66–99 (SAIYSQLGNAYFYLKEYARALQFHKHDLLLARTI), 106–139 (AKASGNLGNTLKVLGRFDEAIVCCQRHLDIAQEQ), 146–178 (ARALYNIGNVYHAKGKQLSWNAAQDPGHLPPDV), 180–199 (ETLHRASEFYERNLSLVKEL), 206–239 (GRAYGNLGNTHYLLGNFTEATTFHKERLAIAKEF), 246–279 (RRAYSNLGNAHIFLGRFDVAAEHYKKTLQLSRQI), 286–319 (AQACYSLGNTYTLLQDYERAAEYHLRHLVIAQEL), and 326–359 (GRACWSLGNAYVSMGSPAQALTFAKKHLQISQEI). The segment at 361-485 (DRNGELTARM…VRVQVPRTGI (125 aa)) is interaction with STK11/LKB1. S410 is modified (phosphoserine). Omega-N-methylarginine is present on R418. Residues 420–439 (PLDREQNGETHHTGDWRGPS) are compositionally biased toward basic and acidic residues. Residues 420–477 (PLDREQNGETHHTGDWRGPSRDSLPLPMRSRKYQEGPDAIERRPREGSHSPLDSADVR) are disordered. Phosphoserine occurs at positions 442, 467, 469, 490, and 491. The span at 451–467 (KYQEGPDAIERRPREGS) shows a compositional bias: basic and acidic residues. One can recognise a GoLoco 1 domain in the interval 493 to 515 (EECFFDLLSKFQSSRMDDQRCPL). Positions 510 to 544 (DQRCPLEEGQAGAAEATAAPTLEERAAQPSVTASP) are disordered. Low complexity predominate over residues 516–530 (EEGQAGAAEATAAPT). Phosphoserine is present on residues S543 and S567. GoLoco domains follow at residues 546–568 (TEEFFDLIASSQSRRLDDQRASV), 594–616 (GDEFFNMLIKYQSSRIDDQRCPP), and 628–650 (DEDFFSLIQRVQAKRMDEQRVDL). Disordered regions lie at residues 609-628 (IDDQRCPPPDVLPRGPTMPD) and 645-673 (EQRVDLAGSPDQEASGLPDPRQQCPPGAS). Position 653 is a phosphoserine (S653).

Belongs to the GPSM family. In terms of assembly, interacts with INSC/inscuteable and FRMPD1. Interacts with GNAI1, GNAI2 and GNAI3 preferentially in their GDP-bound state. May also interact with GNAO1. Interacts with STK11/LKB1 and MACF1. Phosphorylation regulates interaction with G(i/o) alpha. Isoform 4 is specifically expressed in brain by neurons and also detected in testis, liver, kidney, heart and pancreas (at protein level). Highly expressed in cerebellum and subventricular zone-olfactory bulb system. Isoform 2 and isoform 3 are specifically expressed in heart and are also detected in brain.

It is found in the endoplasmic reticulum membrane. It localises to the golgi apparatus membrane. Its subcellular location is the cell membrane. The protein localises to the cytoplasm. The protein resides in the cytosol. Its function is as follows. Guanine nucleotide dissociation inhibitor (GDI) which functions as a receptor-independent activator of heterotrimeric G-protein signaling. Keeps G(i/o) alpha subunit in its GDP-bound form thus uncoupling heterotrimeric G-proteins signaling from G protein-coupled receptors. Controls spindle orientation and asymmetric cell fate of cerebral cortical progenitors. May also be involved in macroautophagy in intestinal cells. May play a role in drug addiction. In Rattus norvegicus (Rat), this protein is G-protein-signaling modulator 1 (Gpsm1).